A 234-amino-acid chain; its full sequence is Glucosamine-6-phosphate deaminase (234 aa).

Catalysis depends on D63, which acts as the Proton acceptor; for enolization step. N129 functions as the For ring-opening step in the catalytic mechanism. H131 serves as the catalytic Proton acceptor; for ring-opening step. The For ring-opening step role is filled by E136.

Belongs to the glucosamine/galactosamine-6-phosphate isomerase family. NagB subfamily.

It catalyses the reaction alpha-D-glucosamine 6-phosphate + H2O = beta-D-fructose 6-phosphate + NH4(+). Its pathway is amino-sugar metabolism; N-acetylneuraminate degradation; D-fructose 6-phosphate from N-acetylneuraminate: step 5/5. In terms of biological role, catalyzes the reversible isomerization-deamination of glucosamine 6-phosphate (GlcN6P) to form fructose 6-phosphate (Fru6P) and ammonium ion. The chain is Glucosamine-6-phosphate deaminase from Listeria monocytogenes serotype 4b (strain CLIP80459).